We begin with the raw amino-acid sequence, 607 residues long: Probable Ufm1-specific protease 2 (607 aa).

Catalysis depends on residues C440, D564, and H566.

The protein belongs to the peptidase C78 family.

Thiol protease which recognizes and hydrolyzes the peptide bond at the C-terminal Gly of UFM1, a ubiquitin-like modifier protein bound to a number of target proteins. Does not hydrolyze SUMO1 or ISG15 ubiquitin-like proteins. This Drosophila melanogaster (Fruit fly) protein is Probable Ufm1-specific protease 2.